The sequence spans 276 residues: Undecaprenyl-diphosphatase 1 (276 aa).

The next 6 helical transmembrane spans lie at alanine 44–tyrosine 63, valine 85–isoleucine 105, leucine 109–alanine 129, alanine 183–serine 203, glycine 214–valine 234, and phenylalanine 249–isoleucine 269.

The protein belongs to the UppP family.

The protein localises to the cell inner membrane. It catalyses the reaction di-trans,octa-cis-undecaprenyl diphosphate + H2O = di-trans,octa-cis-undecaprenyl phosphate + phosphate + H(+). In terms of biological role, catalyzes the dephosphorylation of undecaprenyl diphosphate (UPP). Confers resistance to bacitracin. This chain is Undecaprenyl-diphosphatase 1, found in Stutzerimonas stutzeri (strain A1501) (Pseudomonas stutzeri).